The following is a 1066-amino-acid chain: Ankyrin repeat protein nuc-2 (1066 aa).

The 166-residue stretch at 1–166 folds into the SPX domain; that stretch reads MKFGKQIQKR…KSKTKELYLS (166 aa). 7 ANK repeats span residues 268 to 298, 336 to 366, 370 to 399, 403 to 432, 435 to 465, 470 to 499, and 503 to 532; these read RVTRTFLASINEGSLEALKVLLDTGLVDIQS, YGRVPLHYASMHGRLDMIDALLNASPKTINL, DNFTPLVHSIVRNHLECVGRLLERSARIDP, TDHVPLNLACQHGSVAIVELLLKHGAKILA, EGLYPQHLVARSGQTPEILVLLKQYGADLDQ, YGWTPLVHAASEGNVPCLQALLETGADPNI, and KDLPAMYYAAWEGHLECMKLLTPAKKEKAA. In terms of domain architecture, GP-PDE spans 717 to 1048; it reads ITDFETYWKA…DPFPKLPKGV (332 aa). The tract at residues 923-963 is disordered; sequence KQQQQGSCSKGDGDEDMGGTTAASRREAADERTLQSDGRRT. Residues 946–962 show a composition bias toward basic and acidic residues; that stretch reads SRREAADERTLQSDGRR.

Its function is as follows. Controls phosphorus acquisition. The polypeptide is Ankyrin repeat protein nuc-2 (nuc-2) (Neurospora crassa (strain ATCC 24698 / 74-OR23-1A / CBS 708.71 / DSM 1257 / FGSC 987)).